A 172-amino-acid chain; its full sequence is Large ribosomal subunit protein uL10 (172 aa).

Belongs to the universal ribosomal protein uL10 family. In terms of assembly, part of the ribosomal stalk of the 50S ribosomal subunit. The N-terminus interacts with L11 and the large rRNA to form the base of the stalk. The C-terminus forms an elongated spine to which L12 dimers bind in a sequential fashion forming a multimeric L10(L12)X complex.

Functionally, forms part of the ribosomal stalk, playing a central role in the interaction of the ribosome with GTP-bound translation factors. The protein is Large ribosomal subunit protein uL10 (rplJ) of Liberibacter asiaticus (Citrus greening disease).